Here is a 42-residue protein sequence, read N- to C-terminus: Photosystem I reaction center subunit IX (42 aa).

The chain crosses the membrane as a helical span at residues 7–27 (YLSTAPVLAAIWFGILAGLLI).

Belongs to the PsaJ family.

Its subcellular location is the plastid. It is found in the chloroplast thylakoid membrane. Its function is as follows. May help in the organization of the PsaE and PsaF subunits. The sequence is that of Photosystem I reaction center subunit IX from Staurastrum punctulatum (Green alga).